Consider the following 73-residue polypeptide: Alpha-bungarotoxin N3 (73 aa).

5 disulfides stabilise this stretch: cysteine 3–cysteine 23, cysteine 16–cysteine 43, cysteine 28–cysteine 32, cysteine 47–cysteine 58, and cysteine 59–cysteine 64.

This sequence belongs to the three-finger toxin family. Long-chain subfamily. Type II alpha-neurotoxin sub-subfamily. In terms of assembly, monomer in solution, homodimer in crystal state. As to expression, expressed by the venom gland.

It localises to the secreted. Functionally, binds with high affinity to muscular (alpha-1/CHRNA1) and neuronal (alpha-7/CHRNA7) nicotinic acetylcholine receptor (nAChR) and inhibits acetylcholine from binding to the receptor, thereby impairing neuromuscular and neuronal transmission. Mice injected with this toxin develop flaccid paralysis followed by death. Irreversibly inhibits twitches in a concentration-dependent manner in rat phrenic nerve-hemidiaphragm and chick biventer cervicis muscle. The polypeptide is Alpha-bungarotoxin N3 (Bungarus candidus (Malayan krait)).